Reading from the N-terminus, the 535-residue chain is Potassium channel subfamily K member 10 (535 aa).

Residues Met-1–Thr-68 are Cytoplasmic-facing. Residues Val-69–Ala-89 form a helical membrane-spanning segment. Residues Leu-151–Gly-177 constitute an intramembrane region (pore-forming). Thr-164, Ile-165, Gly-166, and Tyr-167 together coordinate K(+). The tract at residues Thr-164–Asn-169 is selectivity filter 1. A helical membrane pass occupies residues Ile-179 to Ile-199. The Cytoplasmic segment spans residues Gly-200–Val-230. A helical membrane pass occupies residues Ile-231 to Ile-251. Positions Ala-260–Glu-291 form an intramembrane region, pore-forming. K(+) contacts are provided by Thr-273, Val-274, Gly-275, and Phe-276. A selectivity filter 2 region spans residues Thr-273 to Asp-278. A helical membrane pass occupies residues Leu-296–Gly-316. Topologically, residues Asp-317 to Asn-535 are cytoplasmic. Disordered regions lie at residues Gln-410–Asp-438 and Glu-510–Asn-535. Polar residues predominate over residues Leu-525 to Asn-535.

Homodimer; disulfide-linked. Forms heterodimers with other 2-pore domain K(+) channel subunits, such as KCNK2, KCNK4 and KCNK18. As to expression, detected in dorsal root ganglia (DRG) neurons (at protein level).

It is found in the cell membrane. The enzyme catalyses K(+)(in) = K(+)(out). It catalyses the reaction Rb(+)(in) = Rb(+)(out). The catalysed reaction is Cs(+)(in) = Cs(+)(out). Activated by stimuli such as mechanical stretch, acidic pH and polyunsaturated free fatty acids. Activated by a dihydroacridine analog, ML67-33. Inhibited by polycationic dye ruthenium red. Selectively activated by T2A3 (2-[(4-chloro-3-methylphenyl)amino] benzoic acid). Functionally, k(+) channel that conducts voltage-dependent outward rectifying currents upon membrane depolarization. Voltage sensing is coupled to K(+) electrochemical gradient in an 'ion flux gating' mode where outward but not inward ion flow opens the gate. Converts to voltage-independent 'leak' conductance mode upon stimulation by various stimuli including mechanical membrane stretch, acidic pH, heat and lipids. Homo- and heterodimerizes to form functional channels with distinct regulatory and gating properties. In trigeminal ganglia sensory neurons, the heterodimer of KCNK10/TREK-2 and KCNK18/TRESK inhibits neuronal firing and neurogenic inflammation by stabilizing the resting membrane potential at K(+) equilibrium potential as well as by regulating the threshold of action potentials and the spike frequency. Permeable to other monovalent ions such as Rb(+) and Cs(+). The sequence is that of Potassium channel subfamily K member 10 from Mus musculus (Mouse).